The sequence spans 564 residues: Septin-9 (564 aa).

M1 bears the N-acetylmethionine mark. Residue S12 is modified to Phosphoserine. A phosphothreonine mark is found at T24 and T31. 2 disordered regions span residues 38–165 (VASS…PVTD) and 178–224 (PAEA…DSEV). K44 carries the post-translational modification N6-acetyllysine. A phosphoserine mark is found at S64, S67, and S71. Over residues 95–109 (DISSKQVESTASTPG) the composition is skewed to polar residues. Residues 116–134 (KRAEVLGHKTPEPVPRRTE) show a composition bias toward basic and acidic residues. Residue T125 is modified to Phosphothreonine. Residues 190–203 (TLENSEAPMSQLQS) are compositionally biased toward polar residues. Phosphotyrosine is present on Y258. A Septin-type G domain is found at 275–546 (QGFEFNIMVV…EAYRVKRLNE (272 aa)). Positions 285–292 (GQSGLGKS) are G1 motif. 285-292 (GQSGLGKS) contacts GTP. Residues S307 and S312 each carry the phosphoserine modification. GTP-binding positions include T319, G345, 425–433 (KADTLTLEE), G480, and R495. Residues 342 to 345 (DTPG) are G3 motif. Residues 424-427 (AKAD) form a G4 motif region.

The protein belongs to the TRAFAC class TrmE-Era-EngA-EngB-Septin-like GTPase superfamily. Septin GTPase family. Septins polymerize into heterooligomeric protein complexes that form filaments, and associate with cellular membranes, actin filaments, and microtubules. GTPase activity is required for filament formation. Interacts with SEPTIN2, SEPTIN6, SEPTIN7, SEPTIN11 and SEPTIN14. Interacts with RTKN and ARHGEF18. As to expression, expressed in the brain, mainly in the perikarya and processes of astrocytes in the cerebellum, dentate gyrus and corpus callosum (at protein level). In the sciatic nerve, highly expressed in Schwann cells (at protein level). Isoforms are differentially expressed in testes, kidney, liver, heart, spleen and brain. Undetectable in skeletal muscle.

The protein resides in the cytoplasm. It is found in the cytoskeleton. Its function is as follows. Filament-forming cytoskeletal GTPase. May play a role in cytokinesis (Potential). The polypeptide is Septin-9 (Rattus norvegicus (Rat)).